The primary structure comprises 337 residues: ATP-dependent 6-phosphofructokinase (337 aa).

Gly11 provides a ligand contact to ATP. Residue 21–25 participates in ADP binding; it reads RAVVR. ATP contacts are provided by residues 72–73 and 102–105; these read RY and GDGS. Asp103 contributes to the Mg(2+) binding site. 125–127 is a binding site for substrate; it reads TID. Asp127 acts as the Proton acceptor in catalysis. Position 154 (Arg154) interacts with ADP. Substrate-binding positions include Arg162 and 169-171; that span reads MGR. ADP-binding positions include 185-187, Lys212, and 214-216; these read GAD and KNH. Substrate is bound by residues Glu223, Arg245, and 251–254; that span reads HILR.

The protein belongs to the phosphofructokinase type A (PFKA) family. ATP-dependent PFK group I subfamily. Prokaryotic clade 'B1' sub-subfamily. As to quaternary structure, homotetramer. Mg(2+) is required as a cofactor.

The protein localises to the cytoplasm. The catalysed reaction is beta-D-fructose 6-phosphate + ATP = beta-D-fructose 1,6-bisphosphate + ADP + H(+). It participates in carbohydrate degradation; glycolysis; D-glyceraldehyde 3-phosphate and glycerone phosphate from D-glucose: step 3/4. Its activity is regulated as follows. Allosterically activated by ADP and other diphosphonucleosides, and allosterically inhibited by phosphoenolpyruvate. Its function is as follows. Catalyzes the phosphorylation of D-fructose 6-phosphate to fructose 1,6-bisphosphate by ATP, the first committing step of glycolysis. This chain is ATP-dependent 6-phosphofructokinase, found in Streptococcus pyogenes serotype M28 (strain MGAS6180).